Here is a 148-residue protein sequence, read N- to C-terminus: Transcriptional regulator MraZ (148 aa).

2 SpoVT-AbrB domains span residues 5 to 51 (ATSL…PLPA) and 80 to 123 (AEDV…SMEA).

Belongs to the MraZ family. Forms oligomers.

The protein resides in the cytoplasm. Its subcellular location is the nucleoid. In Methylobacillus flagellatus (strain ATCC 51484 / DSM 6875 / VKM B-1610 / KT), this protein is Transcriptional regulator MraZ.